The sequence spans 166 residues: Cold-inducible RNA-binding protein B (166 aa).

An RRM domain is found at 5 to 83 (GKLFIGGLNF…RQIRVDQAGK (79 aa)). The segment at 68 to 166 (GKAVDGRQIR…DSYDSYATHE (99 aa)) is disordered. A compositionally biased stretch (gly residues) spans 92-115 (YRGGSSGGRGFFRGGRGRGGGDRG). The segment covering 133 to 149 (GSRDYYSSGRSQGSYGD) has biased composition (low complexity). Positions 157–166 (DSYDSYATHE) are enriched in basic and acidic residues.

Interacts with prmt1. Interacts with elavl1/elrA (via RRM3). Associates with ribosomes. Methylated on arginine residues within RGG motifs. Methylation by prmt1 promotes cytoplasmic accumulation. As to expression, in adults, most abundant in testis, ovary, brain and liver, with lower expression in kidney and heart.

It localises to the nucleus. Its subcellular location is the nucleoplasm. The protein resides in the cytoplasm. Cold-inducible mRNA binding protein. Acts cooperatively with elavl1/elrA to stabilize AU-rich element (ARE)-containing mRNAs by binding to them and inhibiting their deadenylation. Essential for embryonic gastrulation and neural development, acting to maintain the expression of a set of adhesion molecules, and cell movement during embryogenesis. Required for pronephros development. The polypeptide is Cold-inducible RNA-binding protein B (cirbp-b) (Xenopus laevis (African clawed frog)).